Consider the following 139-residue polypeptide: Transcription antitermination protein NusB (139 aa).

This sequence belongs to the NusB family.

Its function is as follows. Involved in transcription antitermination. Required for transcription of ribosomal RNA (rRNA) genes. Binds specifically to the boxA antiterminator sequence of the ribosomal RNA (rrn) operons. The sequence is that of Transcription antitermination protein NusB from Idiomarina loihiensis (strain ATCC BAA-735 / DSM 15497 / L2-TR).